Here is a 229-residue protein sequence, read N- to C-terminus: Predicted GPI-anchored protein 19 (229 aa).

The first 20 residues, 1–20 (MFSTTSIVLWFTILLPVTLP), serve as a signal peptide directing secretion. Residues 63 to 92 (DNEQVLRKSKKKKKTTSTGTPGNENTTDFA) form a disordered region. Residues 81–92 (GTPGNENTTDFA) are compositionally biased toward polar residues. Asparagine 87, asparagine 184, and asparagine 189 each carry an N-linked (GlcNAc...) asparagine glycan. Glycine 208 carries the GPI-anchor amidated glycine lipid modification. Residues 209 to 229 (FGSLIPYNSFYLYILLFCIIF) constitute a propeptide, removed in mature form.

It is found in the cell membrane. Its function is as follows. Predicted GPI-anchored protein which may have a role during host infection. The polypeptide is Predicted GPI-anchored protein 19 (PGA19) (Candida albicans (strain SC5314 / ATCC MYA-2876) (Yeast)).